The primary structure comprises 310 residues: M1-specific T cell receptor beta chain (310 aa).

Residues 1 to 21 (MSNQVLCCVVLCLLGANTVDG) form the signal peptide. Positions 22–114 (GITQSPKYLF…TAFYLCASSI (93 aa)) are t cell receptor beta variable 19. One can recognise an Ig-like V-type domain in the interval 34-131 (EGQNVTLSCE…FGPGTRLTVT (98 aa)). A glycan (N-linked (GlcNAc...) asparagine) is linked at Asn37. An intrachain disulfide couples Cys42 to Cys110. Residues 46-50 (LNHDA) form a CDR1 region. Asp49 is an a peptide antigen binding site. A CDR2 region spans residues 68-73 (SQIVND). Residues 110–122 (CASSIRSSYEQYF) form a CDR3 region. The t cell receptor beta joining 2-7 stretch occupies residues 117–131 (SYEQYFGPGTRLTVT). The interval 133–310 (DLKNVFPPKV…AMVKRKDSRG (178 aa)) is t cell receptor beta constant 2. Positions 140–249 (PKVAVFEPSE…WTQDRAKPVT (110 aa)) constitute an Ig-like C1-type domain. A disulfide bridge links Cys162 with Cys227. Asn201 carries an N-linked (GlcNAc...) asparagine glycan. The connecting peptide stretch occupies residues 262-276 (CGFTSESYQQGVLSA). A helical membrane pass occupies residues 277-299 (TILYEILLGKATLYAVLVSALVL). Residues 300 to 310 (MAMVKRKDSRG) lie on the Cytoplasmic side of the membrane.

As to quaternary structure, disulfide-linked heterodimer with TRAV27*01J42*01C*01 alpha chain. The TR primarily interacts via its CDR3-beta domain with M/matrix protein 1-derived peptide (GILGFVFTL) displayed by HLA-A*02.01 in a 'peg-notch' recognition mode. The alpha-beta TR associates with the transmembrane signaling CD3 coreceptor proteins to form the TR-CD3 (TCR). The assembly of alpha-beta TR heterodimers with CD3 occurs in the endoplasmic reticulum where a single alpha-beta TR heterodimer associates with one CD3D-CD3E heterodimer, one CD3G-CD3E heterodimer and one CD247 homodimer forming a stable octameric structure. CD3D-CD3E and CD3G-CD3E heterodimers preferentially associate with TR alpha and TR beta chains (via TM domain), respectively. The association of the CD247 homodimer is the last step of TCR assembly in the endoplasmic reticulum and is required for transport to the cell surface. As to expression, expressed in M/matrix protein 1-specific effector memory CD8-positive T cells readily detectable in the peripheral blood, secondary lymphoid organs and lung (primary site of infection) of IAV infected individuals.

The protein resides in the cell membrane. The beta chain of TRAV27*01J42*01C*01/TRBV19*01J2S7*01C*02 alpha-beta T cell receptor (TR) clonotype that is specific for HLA-A*02:01-restricted M/matrix protein 1 immunodominant epitope GILGFVFTL of influenza A virus (IAV). Classified as a public TCR clonotype, it is preferentially selected in effector memory CD8-positive T cells among multiple HLA-A*02:01 carriers/individuals and confers long-lived immunity against IAV infection. Can cross-recognize sporadically emerging IAV variants by molecular mimicry, inducing immunity toward different influenza strains. Antigen recognition initiates TR-CD3 clustering on the cell surface and intracellular activation of LCK that phosphorylates the ITAM motifs of CD3G, CD3D, CD3E and CD247 enabling the recruitment of ZAP70. In turn, ZAP70 phosphorylates LAT, which recruits numerous signaling molecules to form the LAT signalosome. The LAT signalosome propagates signal branching to three major signaling pathways, the calcium, the mitogen-activated protein kinase (MAPK) kinase and the nuclear factor NF-kappa-B (NF-kB) pathways, leading to the mobilization of transcription factors that are critical for gene expression and essential for T cell differentiation into effector/memory T cells. This chain is M1-specific T cell receptor beta chain, found in Homo sapiens (Human).